The sequence spans 259 residues: 14-3-3-like protein (259 aa).

Residues 238–259 (MQDPAAGDDREGADMKVEDAEP) form a disordered region. Over residues 244 to 259 (GDDREGADMKVEDAEP) the composition is skewed to basic and acidic residues.

Belongs to the 14-3-3 family.

The chain is 14-3-3-like protein from Chlamydomonas reinhardtii (Chlamydomonas smithii).